Reading from the N-terminus, the 415-residue chain is Serine hydroxymethyltransferase (415 aa).

(6S)-5,6,7,8-tetrahydrofolate-binding positions include Leu117 and 121 to 123; that span reads GHL. Lys226 carries the N6-(pyridoxal phosphate)lysine modification. Residues Glu241 and 349–351 each bind (6S)-5,6,7,8-tetrahydrofolate; that span reads SPF.

Belongs to the SHMT family. As to quaternary structure, homodimer. It depends on pyridoxal 5'-phosphate as a cofactor.

The protein localises to the cytoplasm. The catalysed reaction is (6R)-5,10-methylene-5,6,7,8-tetrahydrofolate + glycine + H2O = (6S)-5,6,7,8-tetrahydrofolate + L-serine. It functions in the pathway one-carbon metabolism; tetrahydrofolate interconversion. It participates in amino-acid biosynthesis; glycine biosynthesis; glycine from L-serine: step 1/1. In terms of biological role, catalyzes the reversible interconversion of serine and glycine with tetrahydrofolate (THF) serving as the one-carbon carrier. This reaction serves as the major source of one-carbon groups required for the biosynthesis of purines, thymidylate, methionine, and other important biomolecules. Also exhibits THF-independent aldolase activity toward beta-hydroxyamino acids, producing glycine and aldehydes, via a retro-aldol mechanism. This is Serine hydroxymethyltransferase from Geobacter metallireducens (strain ATCC 53774 / DSM 7210 / GS-15).